The sequence spans 88 residues: MTLLASISTIGNVKSISKSNNFSSLSNSSLQSSNSIQCGCGGGSPLIGTVGNLVGGVLVGTGIILGTVVGTVNGVVGGLLSGPNCGCH.

The protein belongs to the hssA/B family.

The polypeptide is HssA/B-like protein 13 (hssl13) (Dictyostelium discoideum (Social amoeba)).